Consider the following 572-residue polypeptide: Cytochrome P450 monooxygenase xilC (572 aa).

C515 is a heme binding site.

It belongs to the cytochrome P450 family. Heme serves as cofactor.

It functions in the pathway secondary metabolite biosynthesis. Its function is as follows. Cytochrome P450 monooxygenase; part of the gene cluster that mediates the biosynthesis of the 6-methyl-2-pyrone derivative xylariolide D. XilC hydroxylates the 5-alkyl-6-methyl-2-pyrone backbone called prexylariolide D, produced by the highly reducing polyketide synthase xilA, on its side chain to form xylariolide D. The polypeptide is Cytochrome P450 monooxygenase xilC (Penicillium crustosum (Blue mold fungus)).